The sequence spans 720 residues: MSDLGESPSSSPPAPPADTAPPPETPSENSALPPVDSSPPSPPADSSSTPPLSEPSTPPPDSQLPPLPSILPPLTDSPPPPSDSSPPVDSTPSPPPPTSNESPSPPEDSETPPAPPNESNDNNPPPSQDLQSPPPSSPSPNVGPTNPESPPLQSPPAPPASDPTNSPPASPLDPTNPPPIQPSGPATSPPANPNAPPSPFPTVPPKTPSSGPVVSPSLTSPSKGTPTPNQGNGDGGGGGGGYQGKTMVGMAVAGFAIMALIGVVFLVRRKKKRNIDSYNHSQYLPHPNFSVKSDGFLYGQDPGKGYSSGPNGSMYNNSQQQQSSMGNSYGTAGGGYPHHQMQSSGTPDSAILGSGQTHFSYEELAEITQGFARKNILGEGGFGCVYKGTLQDGKVVAVKQLKAGSGQGDREFKAEVEIISRVHHRHLVSLVGYCISDQHRLLIYEYVSNQTLEHHLHGKGLPVLEWSKRVRIAIGSAKGLAYLHEDCHPKIIHRDIKSANILLDDEYEAQVADFGLARLNDTTQTHVSTRVMGTFGYLAPEYASSGKLTDRSDVFSFGVVLLELVTGRKPVDQTQPLGEESLVEWARPLLLKAIETGDLSELIDTRLEKRYVEHEVFRMIETAAACVRHSGPKRPRMVQVVRALDCDGDSGDISNGIKIGQSTTYDSGQYNEDIMKFRKMAFGGDNSVESGLYSGNYSAKSSSDFSGNESETRPFNNRRF.

Residues M1–G240 form a disordered region. Residues M1–T246 are Extracellular-facing. Residues S10–T25 are compositionally biased toward pro residues. Low complexity predominate over residues P26 to V35. 2 stretches are compositionally biased toward pro residues: residues L52 to S84 and P92 to P116. N-linked (GlcNAc...) asparagine glycosylation occurs at N117. Pro residues-rich tracts occupy residues N123–P138 and P147–T207. The helical transmembrane segment at M247–V267 threads the bilayer. Topologically, residues R268–F720 are cytoplasmic. The interval Q300–S349 is disordered. Residues N311–G330 show a composition bias toward low complexity. The Protein kinase domain occupies F371 to A624. ATP-binding positions include L377 to V385 and K399. Y444 carries the phosphotyrosine modification. Catalysis depends on D495, which acts as the Proton acceptor. Position 528 is a phosphoserine (S528). T529 and T534 each carry phosphothreonine. The residue at position 542 (Y542) is a Phosphotyrosine. The disordered stretch occupies residues S698–F720.

This sequence belongs to the protein kinase superfamily. Ser/Thr protein kinase family. As to expression, mostly expressed in apical parts, including flower buds, and particularly in anthers. Also present in root hairs.

Its subcellular location is the cell membrane. The catalysed reaction is L-seryl-[protein] + ATP = O-phospho-L-seryl-[protein] + ADP + H(+). It catalyses the reaction L-threonyl-[protein] + ATP = O-phospho-L-threonyl-[protein] + ADP + H(+). Its function is as follows. Regulates the auxin-related MAX (More Axillary Growth) pathway during the shoot branching. This is Proline-rich receptor-like protein kinase PERK12 (PERK12) from Arabidopsis thaliana (Mouse-ear cress).